The chain runs to 510 residues: GMP synthase [glutamine-hydrolyzing] (510 aa).

In terms of domain architecture, Glutamine amidotransferase type-1 spans 5–195 (MIVVLDFGSQ…VFEVCGCRGD (191 aa)). The active-site Nucleophile is Cys82. Catalysis depends on residues His169 and Glu171. Positions 196–385 (WTMENFIDEQ…LGIPDEIVWR (190 aa)) constitute a GMPS ATP-PPase domain. 223-229 (SGGVDSS) lines the ATP pocket.

Homodimer.

It catalyses the reaction XMP + L-glutamine + ATP + H2O = GMP + L-glutamate + AMP + diphosphate + 2 H(+). Its pathway is purine metabolism; GMP biosynthesis; GMP from XMP (L-Gln route): step 1/1. Catalyzes the synthesis of GMP from XMP. The protein is GMP synthase [glutamine-hydrolyzing] of Geobacillus kaustophilus (strain HTA426).